Reading from the N-terminus, the 180-residue chain is Cytokinin-beta-glucosidase (180 aa).

Accumulates in young leaves and shoot tips.

Its function is as follows. Hydrolyzes cytokinin glucosides thus liberating free cytokinins. The chain is Cytokinin-beta-glucosidase (TROLC) from Nicotiana tabacum (Common tobacco).